The following is a 215-amino-acid chain: Soluble inorganic pyrophosphatase (215 aa).

Residues 1-21 show a composition bias toward low complexity; sequence MSQEDSTSAAAAQQPTSRPAP. Residues 1–24 form a disordered region; that stretch reads MSQEDSTSAAAAQQPTSRPAPKLN. Residues Asp103, Asp108, and Asp140 each coordinate Mg(2+).

It belongs to the PPase family. It depends on Mg(2+) as a cofactor. Expressed in metabolically active tissue such as root, shoot, embryo and aleurone.

It localises to the cytoplasm. The catalysed reaction is diphosphate + H2O = 2 phosphate + H(+). Its function is as follows. May play a role in germination. In Hordeum vulgare subsp. vulgare (Domesticated barley), this protein is Soluble inorganic pyrophosphatase (IPP).